A 98-amino-acid chain; its full sequence is Complement inhibitor RaCI1 (98 aa).

Positions 1–20 (MNAMLVLFIASALFISEHNT) are cleaved as a signal peptide. 3 disulfide bridges follow: C33–C57, C38–C59, and C53–C74. The disordered stretch occupies residues 79-98 (TTKPPMAPGDNKDNKEEESN). The segment covering 88–98 (DNKDNKEEESN) has biased composition (basic and acidic residues).

It belongs to the RaCI family. Expressed in salivary glands.

The protein resides in the secreted. Complement inhibitor. Prevents complement-mediated C5 activation by binding to C5. Binds C5 at a different binding site than the other tick complement inhibitors OmCI and CirpT1, and the drug eculizumab. Inhibits the complement in human and guinea pig but not in other species tested (rabbit, rat, mouse, and pig). This chain is Complement inhibitor RaCI1, found in Rhipicephalus appendiculatus (Brown ear tick).